The following is a 193-amino-acid chain: Large ribosomal subunit protein uL5 (193 aa).

This sequence belongs to the universal ribosomal protein uL5 family. As to quaternary structure, part of the 50S ribosomal subunit; part of the 5S rRNA/L5/L18/L25 subcomplex. Contacts the 5S rRNA and the P site tRNA. Forms a bridge to the 30S subunit in the 70S ribosome.

In terms of biological role, this is one of the proteins that bind and probably mediate the attachment of the 5S RNA into the large ribosomal subunit, where it forms part of the central protuberance. In the 70S ribosome it contacts protein S13 of the 30S subunit (bridge B1b), connecting the 2 subunits; this bridge is implicated in subunit movement. Contacts the P site tRNA; the 5S rRNA and some of its associated proteins might help stabilize positioning of ribosome-bound tRNAs. The polypeptide is Large ribosomal subunit protein uL5 (Corynebacterium urealyticum (strain ATCC 43042 / DSM 7109)).